The primary structure comprises 187 residues: UPF0301 protein YqgE (187 aa).

The protein belongs to the UPF0301 (AlgH) family.

The sequence is that of UPF0301 protein YqgE from Escherichia coli O7:K1 (strain IAI39 / ExPEC).